The following is a 143-amino-acid chain: Large ribosomal subunit protein uL11 (143 aa).

This sequence belongs to the universal ribosomal protein uL11 family. Part of the ribosomal stalk of the 50S ribosomal subunit. Interacts with L10 and the large rRNA to form the base of the stalk. L10 forms an elongated spine to which L12 dimers bind in a sequential fashion forming a multimeric L10(L12)X complex. One or more lysine residues are methylated.

In terms of biological role, forms part of the ribosomal stalk which helps the ribosome interact with GTP-bound translation factors. This is Large ribosomal subunit protein uL11 from Rhizobium etli (strain CIAT 652).